A 362-amino-acid polypeptide reads, in one-letter code: Innexin inx1 (362 aa).

Residues 1-28 (MYKLLGSLKSYLKWQDIQTDNAVFRLHN) are Cytoplasmic-facing. Residues 29 to 49 (SFTTVLLLTCSLIITATQYVG) form a helical membrane-spanning segment. The Extracellular portion of the chain corresponds to 50 to 110 (QPISCIVNGV…DAKKYYTYYQ (61 aa)). The helical transmembrane segment at 111–131 (WVCFVLFFQAMACYTPKFLWN) threads the bilayer. The Cytoplasmic segment spans residues 132–177 (KFEGGLMRMIVMGLNITICTREEKEAKRDALLDYLIKHVKRHKLYA). Residues 178-198 (IRYWACEFLCCINIIVQMYLM) form a helical membrane-spanning segment. Over 199 to 267 (NRFFDGEFLS…LPLNIVNEKT (69 aa)) the chain is Extracellular. A helical transmembrane segment spans residues 268–288 (YVFIWFWFWILLVLLIGLIVF). Over 289 to 362 (RGCIIFMPKF…VEPSKHDRAK (74 aa)) the chain is Cytoplasmic.

This sequence belongs to the pannexin family. Heterooligomer of Inx2 and ogre. In ovary, expressed in follicle cells. Expressed around the periphery of the embryo during cellular blastoderm formation. Repeating epidermal pattern emerges from stage 11, high levels of expression detected along the borders of each segment from stage 13. At stage 13, expressed in the dorsal branch of the tracheal system. During stage 15, detected in a few cells at each of the branch points of the dorsal trunk and at low levels in cardioblasts. In embryos, also expressed in the salivary gland and the hindgut (at protein level). At stage 17, expressed in the dorsal side of the CNS. Expressed in the imaginal wing disk. Expressed in larval CNS and in tissues outside of the CNS. In pupae, expressed in the CNS and in primary, secondary and tertiary pigment cells of the retina.

Its subcellular location is the cell membrane. The protein localises to the cell junction. It is found in the gap junction. It localises to the basolateral cell membrane. Its function is as follows. Structural component of the gap junctions. Essential for generation and/or maintenance of postembryonic neuroblasts and normal development of optic lobe. This is Innexin inx1 (ogre) from Drosophila melanogaster (Fruit fly).